The sequence spans 316 residues: Transaldolase (316 aa).

Lysine 127 acts as the Schiff-base intermediate with substrate in catalysis.

The protein belongs to the transaldolase family. Type 2 subfamily.

The protein resides in the cytoplasm. The catalysed reaction is D-sedoheptulose 7-phosphate + D-glyceraldehyde 3-phosphate = D-erythrose 4-phosphate + beta-D-fructose 6-phosphate. It participates in carbohydrate degradation; pentose phosphate pathway; D-glyceraldehyde 3-phosphate and beta-D-fructose 6-phosphate from D-ribose 5-phosphate and D-xylulose 5-phosphate (non-oxidative stage): step 2/3. In terms of biological role, transaldolase is important for the balance of metabolites in the pentose-phosphate pathway. The protein is Transaldolase of Helicobacter pylori (strain Shi470).